The following is a 401-amino-acid chain: tRNA(Met) cytidine acetate ligase (401 aa).

Residues 7-20, G101, N160, and 185-186 each bind ATP; these read IVEY…HLYH and RI.

This sequence belongs to the TmcAL family.

It is found in the cytoplasm. The catalysed reaction is cytidine(34) in elongator tRNA(Met) + acetate + ATP = N(4)-acetylcytidine(34) in elongator tRNA(Met) + AMP + diphosphate. Functionally, catalyzes the formation of N(4)-acetylcytidine (ac(4)C) at the wobble position of elongator tRNA(Met), using acetate and ATP as substrates. First activates an acetate ion to form acetyladenylate (Ac-AMP) and then transfers the acetyl group to tRNA to form ac(4)C34. The sequence is that of tRNA(Met) cytidine acetate ligase from Geobacillus sp. (strain WCH70).